Reading from the N-terminus, the 358-residue chain is Popeye domain-containing protein 1 (358 aa).

At 1–48 (MNSTESIPLAQSTVAGFTSELESLTPVPSNETTCENWREIHHLVFHVA) the chain is on the extracellular side. 2 N-linked (GlcNAc...) asparagine glycosylation sites follow: Asn2 and Asn30. A helical transmembrane segment spans residues 49–69 (NVCFAVGLLIPTTLHLHMILL). Position 70 (Arg70) is a topological domain, cytoplasmic. The chain crosses the membrane as a helical span at residues 71–91 (VMLSLGCTLYVVWATLYRCAL). Position 92 (Asp92) is a topological domain, extracellular. The chain crosses the membrane as a helical span at residues 93–113 (VMIWNSVFLGINILHLSYLLY). The required for interaction with CAV3 stretch occupies residues 93-115 (VMIWNSVFLGINILHLSYLLYKK). The Cytoplasmic portion of the chain corresponds to 114–358 (KKRPVKIEKE…PDALKVHQLP (245 aa)). The segment at 136-186 (RVPPDLFRRLTGQFCMIQTLKRGQVYATEDKTSVDDRLSILLKGRMKVSYR) is required for interaction with KCNK2. Phosphoserine occurs at positions 295 and 318. Over residues 313–323 (SSSTASLPMSS) the composition is skewed to low complexity. The disordered stretch occupies residues 313–350 (SSSTASLPMSSPQQRASAKMKPIEEGVEDDDEVFVSPD).

Belongs to the popeye family. As to quaternary structure, homodimer. Homodimerization requires the C-terminus cytoplasmic region. Interacts (via the C-terminus cytoplasmic tail) with TJP1. Interacts (via the C-terminus cytoplasmic tail) with ARHGEF25/GEFT (via the DH domain). Interacts (via the C-terminus cytoplasmic tail) with VAMP3. Interacts with KCNK2; the interaction enhances KCNK2 surface expression and is inhibited by cAMP. Interacts with CAV3. As to expression, expressed in epithelial cells, skeletal muscle, heart and intestinal smooth muscle (at protein level). Expressed in fetal and adult heart and skeletal muscle.

It localises to the lateral cell membrane. It is found in the cell junction. The protein localises to the tight junction. The protein resides in the membrane. Its subcellular location is the cell membrane. It localises to the sarcolemma. It is found in the caveola. Cell adhesion molecule involved in the establishment and/or maintenance of cell integrity. Involved in the formation and regulation of the tight junction (TJ) paracellular permeability barrier in epithelial cells. Plays a role in VAMP3-mediated vesicular transport and recycling of different receptor molecules through its interaction with VAMP3. Plays a role in the regulation of cell shape and movement by modulating the Rho-family GTPase activity through its interaction with ARHGEF25/GEFT. Induces primordial adhesive contact and aggregation of epithelial cells in a Ca(2+)-independent manner. Also involved in striated muscle regeneration and repair and in the regulation of cell spreading. Important for the maintenance of cardiac function. Plays a regulatory function in heart rate dynamics mediated, at least in part, through cAMP-binding and, probably, by increasing cell surface expression of the potassium channel KCNK2 and enhancing current density. Is a caveolae-associated protein important for the preservation of caveolae structural and functional integrity as well as for heart protection against ischemia injury. This Mus musculus (Mouse) protein is Popeye domain-containing protein 1.